The chain runs to 174 residues: UPF0664 stress-induced protein C29B12.11c (174 aa).

The interval 147–174 (HLDPLPPYHRPSSSQDQPPHYEEAVNKS) is disordered. The segment covering 165–174 (PHYEEAVNKS) has biased composition (basic and acidic residues).

The protein belongs to the UPF0664 family.

It localises to the cytoplasm. It is found in the nucleus. This chain is UPF0664 stress-induced protein C29B12.11c, found in Schizosaccharomyces pombe (strain 972 / ATCC 24843) (Fission yeast).